The primary structure comprises 184 residues: Probable archaeosortase E (184 aa).

Transmembrane regions (helical) follow at residues 27-47 (ILFL…LSYF), 86-106 (VVEE…IIVY), 114-134 (IIGI…IVLI), and 151-171 (IAGY…YLKI). The Acyl-thioester intermediate role is filled by cysteine 90. Catalysis depends on arginine 130, which acts as the Proton donor.

This sequence belongs to the exosortase/archaeosortase family. Archaeosortase E subfamily.

It localises to the cell membrane. Its function is as follows. Transpeptidase that recognizes and modifies its substrate by proteolytic cleavage of a sorting signal. Following cleavage, a covalent intermediate is formed via a thioester bond between the archaeosortase and its substrate, which is then transferred and covalently attached to the cell membrane. The polypeptide is Probable archaeosortase E (Methanocaldococcus jannaschii (strain ATCC 43067 / DSM 2661 / JAL-1 / JCM 10045 / NBRC 100440) (Methanococcus jannaschii)).